A 482-amino-acid chain; its full sequence is Malvidin galactosylase UGT88C3 (482 aa).

The active-site Proton acceptor is the histidine 16. Aspartate 117 acts as the Charge relay in catalysis. UDP contacts are provided by serine 279, tryptophan 345, alanine 349, histidine 366, asparagine 370, serine 371, and glutamate 374.

This sequence belongs to the UDP-glycosyltransferase family.

Its subcellular location is the endoplasmic reticulum. It localises to the nucleus. The enzyme catalyses malvidin + UDP-alpha-D-galactose = malvidin 3-O-beta-D-galactoside + UDP + H(+). It functions in the pathway pigment biosynthesis; anthocyanin biosynthesis. In terms of biological role, UDP-glycosyltransferase which uses UDP-galactose and malvidin as substrates to catalyze the biosynthesis of malvidin 3-O-galactoside, an anthocyanin conferring purple pigmentation. This Oryza sativa subsp. indica (Rice) protein is Malvidin galactosylase UGT88C3.